Reading from the N-terminus, the 196-residue chain is Corrinoid adenosyltransferase (196 aa).

36 to 42 (GNGKGKT) contacts ATP.

It belongs to the Cob(I)alamin adenosyltransferase family.

Its subcellular location is the cytoplasm. It carries out the reaction 2 cob(II)yrinate a,c diamide + reduced [electron-transfer flavoprotein] + 2 ATP = 2 adenosylcob(III)yrinate a,c-diamide + 2 triphosphate + oxidized [electron-transfer flavoprotein] + 3 H(+). It catalyses the reaction 2 cob(II)alamin + reduced [electron-transfer flavoprotein] + 2 ATP = 2 adenosylcob(III)alamin + 2 triphosphate + oxidized [electron-transfer flavoprotein] + 3 H(+). It participates in cofactor biosynthesis; adenosylcobalamin biosynthesis; adenosylcobalamin from cob(II)yrinate a,c-diamide: step 2/7. Functionally, required for both de novo synthesis of the corrin ring for the assimilation of exogenous corrinoids. Participates in the adenosylation of a variety of incomplete and complete corrinoids. The protein is Corrinoid adenosyltransferase (btuR) of Escherichia coli O6:H1 (strain CFT073 / ATCC 700928 / UPEC).